An 82-amino-acid polypeptide reads, in one-letter code: uncharacterized protein (82 aa).

The next 3 helical transmembrane spans lie at 4-26 (LDIA…TCIC), 31-48 (LMPM…FTIF), and 52-74 (FLGW…LIVV).

It is found in the cell membrane. This is an uncharacterized protein from Bacillus subtilis (strain 168).